Reading from the N-terminus, the 47-residue chain is U18-ctenitoxin-Pn1a (47 aa).

Disulfide bonds link Cys-2-Cys-16, Cys-9-Cys-22, Cys-13-Cys-46, Cys-15-Cys-34, and Cys-24-Cys-32.

As to expression, expressed by the venom gland.

The protein resides in the secreted. Functionally, neurotoxin. Causes spastic paralysis and death in mice by intracerebroventricular injection at dose levels of 3 ug per mouse. This chain is U18-ctenitoxin-Pn1a, found in Phoneutria nigriventer (Brazilian armed spider).